The chain runs to 301 residues: Nucleosome assembly protein 1;3 (301 aa).

A coiled-coil region spans residues 15-69; it reads VETLKNKLQALAEQHVDVLESLAPVVRKRVDVLIEIQSQHDELEAKFLEEKAALE. The short motif at 36–51 is the Nuclear export signal element; sequence LAPVVRKRVDVLIEIQ. Residues 278-301 form a disordered region; sequence DEDYGASWVDDEEDDDDEYSDEEA.

The protein belongs to the nucleosome assembly protein (NAP) family.

The protein localises to the nucleus. It is found in the cytoplasm. In terms of biological role, may modulate chromatin structure by regulation of nucleosome assembly/disassembly. This is Nucleosome assembly protein 1;3 (NAP1;3) from Oryza sativa subsp. japonica (Rice).